A 273-amino-acid polypeptide reads, in one-letter code: Eukaryotic translation initiation factor 3 subunit G-2 (273 aa).

The RRM domain maps to 193 to 271 (SAVRISNLSE…LILCVEWSKP (79 aa)).

This sequence belongs to the eIF-3 subunit G family. Component of the eukaryotic translation initiation factor 3 (eIF-3) complex. The eIF-3 complex interacts with pix.

It is found in the cytoplasm. In terms of biological role, RNA-binding component of the eukaryotic translation initiation factor 3 (eIF-3) complex, which is involved in protein synthesis of a specialized repertoire of mRNAs and, together with other initiation factors, stimulates binding of mRNA and methionyl-tRNAi to the 40S ribosome. The eIF-3 complex specifically targets and initiates translation of a subset of mRNAs involved in cell proliferation. This subunit can bind 18S rRNA. In Drosophila simulans (Fruit fly), this protein is Eukaryotic translation initiation factor 3 subunit G-2.